Consider the following 477-residue polypeptide: ATP synthase subunit beta (477 aa).

148-155 (GGAGVGKT) is a binding site for ATP.

It belongs to the ATPase alpha/beta chains family. As to quaternary structure, F-type ATPases have 2 components, CF(1) - the catalytic core - and CF(0) - the membrane proton channel. CF(1) has five subunits: alpha(3), beta(3), gamma(1), delta(1), epsilon(1). CF(0) has three main subunits: a(1), b(2) and c(9-12). The alpha and beta chains form an alternating ring which encloses part of the gamma chain. CF(1) is attached to CF(0) by a central stalk formed by the gamma and epsilon chains, while a peripheral stalk is formed by the delta and b chains.

It localises to the cell inner membrane. The enzyme catalyses ATP + H2O + 4 H(+)(in) = ADP + phosphate + 5 H(+)(out). In terms of biological role, produces ATP from ADP in the presence of a proton gradient across the membrane. The catalytic sites are hosted primarily by the beta subunits. In Psychrobacter cryohalolentis (strain ATCC BAA-1226 / DSM 17306 / VKM B-2378 / K5), this protein is ATP synthase subunit beta.